Here is a 308-residue protein sequence, read N- to C-terminus: Acetyl-coenzyme A carboxylase carboxyl transferase subunit beta (308 aa).

Residues 25–294 (VWTKCTSCEQ…PLVVSVNDAP (270 aa)) enclose the CoA carboxyltransferase N-terminal domain. 4 residues coordinate Zn(2+): C29, C32, C48, and C51. The segment at 29-51 (CTSCEQVLYYAELERNLEVCPKC) adopts a C4-type zinc-finger fold.

The protein belongs to the AccD/PCCB family. Acetyl-CoA carboxylase is a heterohexamer composed of biotin carboxyl carrier protein (AccB), biotin carboxylase (AccC) and two subunits each of ACCase subunit alpha (AccA) and ACCase subunit beta (AccD). Zn(2+) serves as cofactor.

It localises to the cytoplasm. The catalysed reaction is N(6)-carboxybiotinyl-L-lysyl-[protein] + acetyl-CoA = N(6)-biotinyl-L-lysyl-[protein] + malonyl-CoA. It participates in lipid metabolism; malonyl-CoA biosynthesis; malonyl-CoA from acetyl-CoA: step 1/1. Functionally, component of the acetyl coenzyme A carboxylase (ACC) complex. Biotin carboxylase (BC) catalyzes the carboxylation of biotin on its carrier protein (BCCP) and then the CO(2) group is transferred by the transcarboxylase to acetyl-CoA to form malonyl-CoA. This chain is Acetyl-coenzyme A carboxylase carboxyl transferase subunit beta, found in Vibrio cholerae serotype O1 (strain ATCC 39315 / El Tor Inaba N16961).